The following is a 275-amino-acid chain: Small ribosomal subunit protein uS3 (275 aa).

Residues 38–106 (IRRLLSSGLE…QVQLNILEVK (69 aa)) form the KH type-2 domain. The segment at 217 to 275 (AVPAGADRPRRERPAGSRPRRSGASGTTATGTEAGRAVGSEEPAAAESATTPEAQSTES) is disordered. Positions 238–275 (SGASGTTATGTEAGRAVGSEEPAAAESATTPEAQSTES) are enriched in low complexity.

It belongs to the universal ribosomal protein uS3 family. In terms of assembly, part of the 30S ribosomal subunit. Forms a tight complex with proteins S10 and S14.

In terms of biological role, binds the lower part of the 30S subunit head. Binds mRNA in the 70S ribosome, positioning it for translation. This is Small ribosomal subunit protein uS3 from Mycobacterium marinum (strain ATCC BAA-535 / M).